A 266-amino-acid chain; its full sequence is uncharacterized protein (266 aa).

Residues 13–33 (IIGLMLIIFAGILFYAYILQH) traverse the membrane as a helical segment.

It belongs to the LicD transferase family.

The protein resides in the membrane. This is an uncharacterized protein from Rickettsia prowazekii (strain Madrid E).